A 904-amino-acid chain; its full sequence is Dual specificity tyrosine-phosphorylation-regulated kinase mbk-1 (904 aa).

3 disordered regions span residues 1–151 (MNSG…MPPE), 250–272 (TVGRHTSLDSSGKPKTGKEASSS), and 285–345 (AVPN…YNNG). A compositionally biased stretch (polar residues) spans 9–23 (NLQAWGQQPSSSYSN). Residues 24-35 (TQQQHGQITGQI) are compositionally biased toward low complexity. Positions 59–75 (ELEKSKKIAEQPTEHPQ) are enriched in basic and acidic residues. Over residues 112 to 123 (NNSNSQNFFPQQ) the composition is skewed to low complexity. Polar residues predominate over residues 286 to 297 (VPNTSSSGNQPH). The 324-residue stretch at 367–690 (ILSDTPVGKG…TLFPVSHTAY (324 aa)) folds into the Protein kinase domain. Residues 373–381 (VGKGSFGQV) and Lys396 each bind ATP. Asp495 serves as the catalytic Proton acceptor. Disordered stretches follow at residues 717–830 (YRPV…DQAE) and 881–904 (MSHGNVNAGSSRDMEKHDYPNNKL). The span at 721-733 (PTSSHPISVTSSF) shows a compositional bias: polar residues. The span at 749-820 (SQQNYHNPNY…VQQHSSSSSR (72 aa)) shows a compositional bias: low complexity. A compositionally biased stretch (polar residues) spans 881–890 (MSHGNVNAGS). Residues 892-904 (RDMEKHDYPNNKL) are compositionally biased toward basic and acidic residues.

This sequence belongs to the protein kinase superfamily. CMGC Ser/Thr protein kinase family. MNB/DYRK subfamily. Mg(2+) is required as a cofactor.

The protein resides in the nucleus. The enzyme catalyses L-seryl-[protein] + ATP = O-phospho-L-seryl-[protein] + ADP + H(+). The catalysed reaction is L-threonyl-[protein] + ATP = O-phospho-L-threonyl-[protein] + ADP + H(+). It catalyses the reaction L-tyrosyl-[protein] + ATP = O-phospho-L-tyrosyl-[protein] + ADP + H(+). In terms of biological role, possible role in the function of olfactory neurons. This is Dual specificity tyrosine-phosphorylation-regulated kinase mbk-1 from Caenorhabditis briggsae.